The chain runs to 129 residues: Mediator of RNA polymerase II transcription subunit 31-B (129 aa).

This sequence belongs to the Mediator complex subunit 31 family. As to quaternary structure, component of the Mediator complex.

The protein localises to the nucleus. Its function is as follows. Component of the Mediator complex, a coactivator involved in the regulated transcription of nearly all RNA polymerase II-dependent genes. Mediator functions as a bridge to convey information from gene-specific regulatory proteins to the basal RNA polymerase II transcription machinery. Mediator is recruited to promoters by direct interactions with regulatory proteins and serves as a scaffold for the assembly of a functional preinitiation complex with RNA polymerase II and the general transcription factors. In Xenopus laevis (African clawed frog), this protein is Mediator of RNA polymerase II transcription subunit 31-B (med31-b).